Reading from the N-terminus, the 248-residue chain is Pyridoxine 5'-phosphate synthase (248 aa).

Asn-12 provides a ligand contact to 3-amino-2-oxopropyl phosphate. 14-15 contacts 1-deoxy-D-xylulose 5-phosphate; the sequence is DH. Residue Arg-23 coordinates 3-amino-2-oxopropyl phosphate. Residue His-48 is the Proton acceptor of the active site. The 1-deoxy-D-xylulose 5-phosphate site is built by Arg-50 and His-55. Residue Glu-75 is the Proton acceptor of the active site. 1-deoxy-D-xylulose 5-phosphate is bound at residue Thr-105. His-196 serves as the catalytic Proton donor. 3-amino-2-oxopropyl phosphate-binding positions include Gly-197 and 218 to 219; that span reads GH.

The protein belongs to the PNP synthase family. As to quaternary structure, homooctamer; tetramer of dimers.

The protein resides in the cytoplasm. The catalysed reaction is 3-amino-2-oxopropyl phosphate + 1-deoxy-D-xylulose 5-phosphate = pyridoxine 5'-phosphate + phosphate + 2 H2O + H(+). The protein operates within cofactor biosynthesis; pyridoxine 5'-phosphate biosynthesis; pyridoxine 5'-phosphate from D-erythrose 4-phosphate: step 5/5. In terms of biological role, catalyzes the complicated ring closure reaction between the two acyclic compounds 1-deoxy-D-xylulose-5-phosphate (DXP) and 3-amino-2-oxopropyl phosphate (1-amino-acetone-3-phosphate or AAP) to form pyridoxine 5'-phosphate (PNP) and inorganic phosphate. The sequence is that of Pyridoxine 5'-phosphate synthase from Ectopseudomonas mendocina (strain ymp) (Pseudomonas mendocina).